The sequence spans 333 residues: MATARPSSCGRDSVPATPRASIDVSLVVVVHGGGASNISPGRKELVSEGIAKAATEGYNILKAGGSAVDAVEGAVTMLENDPEFNAGYGSVLNADGDIEMDASIMDGKDLSAGAVSAVRCIANPVKLARLVMEKTPHCFLTGRGAEKFAADMGIPQTPAEKLITERTKKHLEKEKLEKGAQKADCPKNSGTVGAVALDCKGNLAYATSTGGIVNKMVGRVGDSPCIGAGGYADNNLGAVSTTGHGESILKVNLARLALFHVEQGKTVDEAATLALDYMKSKLKGLGGLILINKTGDWVAKWTSASMPWAAVKNGKLQAGIDLCETKTRNLPTC.

The Nucleophile role is filled by threonine 191. Residues arginine 219–aspartate 222 and threonine 242–glycine 245 each bind substrate.

It belongs to the Ntn-hydrolase family. Heterodimer of an alpha and beta chain produced by autocleavage. This heterodimer may then dimerize in turn, giving rise to a heterotetramer. Cleaved into an alpha and beta chain by autocatalysis; this activates the enzyme. The N-terminal residue of the beta subunit is responsible for the nucleophile hydrolase activity. In terms of tissue distribution, present in testis, brain, liver, kidney, heart and skeletal muscle. In brain, specifically present in the astrocytic lineage. Present in sperm (at protein level).

The protein localises to the cytoplasm. The enzyme catalyses L-asparagine + H2O = L-aspartate + NH4(+). The catalysed reaction is Cleavage of a beta-linked Asp residue from the N-terminus of a polypeptide.. Functionally, has both L-asparaginase and beta-aspartyl peptidase activity. Is highly active with L-Asp beta-methyl ester. Besides, has catalytic activity toward beta-aspartyl dipeptides and their methyl esters, including beta-L-Asp-L-Phe, beta-L-Asp-L-Phe methyl ester (aspartame), beta-L-Asp-L-Ala, beta-L-Asp-L-Leu and beta-L-Asp-L-Lys. Does not have aspartylglucosaminidase activity and is inactive toward GlcNAc-L-Asn. Likewise, has no activity toward glutamine. May be involved in the production of L-aspartate, which can act as an excitatory neurotransmitter in some brain regions. This Rattus norvegicus (Rat) protein is Isoaspartyl peptidase/L-asparaginase (Asrgl1).